A 424-amino-acid chain; its full sequence is STAM-binding protein (424 aa).

The tract at residues 1–127 (MSDHGDVSLP…YTEYNEEKKK (127 aa)) is interaction with CHMP3. A phosphoserine mark is found at Ser2 and Ser48. The interaction with STAM stretch occupies residues 227–231 (PAKPP). A phosphoserine mark is found at Ser243, Ser245, and Ser247. In terms of domain architecture, MPN spans 257-388 (VVVPGRLCPQ…LTDHGLEEIS (132 aa)). His335, His337, Asp348, His350, Cys390, His396, and His398 together coordinate Zn(2+). The short motif at 335–348 (HTHPTQTAFLSSVD) is the JAMM motif element.

Belongs to the peptidase M67C family. As to quaternary structure, interacts with STAM. Interacts with SMAD6 and SMAD7. Interacts with CHMP3; the interaction appears to relieve the autoinhibition of CHMP3. Interacts with SMURF2 and RNF11; this interaction promotes ubiquitination. The cofactor is Zn(2+). Post-translationally, phosphorylated after BMP type I receptor activation. Ubiquitinated by SMURF2 in the presence of RNF11. Ubiquitously expressed.

Its subcellular location is the nucleus. It localises to the membrane. The protein resides in the cytoplasm. It is found in the early endosome. Its activity is regulated as follows. Inhibited by N-ethylmaleimide. Strongly and specifically inhibited by ubiquitin variants UbV(SP.2) and UbV(SP.3). Also inhibited by UbV(SP.1); an ubiquitin variant that also inhibits STAMBPL1. Functionally, zinc metalloprotease that specifically cleaves 'Lys-63'-linked polyubiquitin chains. Does not cleave 'Lys-48'-linked polyubiquitin chains. Plays a role in signal transduction for cell growth and MYC induction mediated by IL-2 and GM-CSF. Potentiates BMP (bone morphogenetic protein) signaling by antagonizing the inhibitory action of SMAD6 and SMAD7. Has a key role in regulation of cell surface receptor-mediated endocytosis and ubiquitin-dependent sorting of receptors to lysosomes. Endosomal localization of STAMBP is required for efficient EGFR degradation but not for its internalization. Involved in the negative regulation of PI3K-AKT-mTOR and RAS-MAP signaling pathways. In Homo sapiens (Human), this protein is STAM-binding protein (STAMBP).